The chain runs to 344 residues: uncharacterized protein (344 aa).

The protein belongs to the MG414/MG415 family.

This is an uncharacterized protein from Mycoplasma pneumoniae (strain ATCC 29342 / M129 / Subtype 1) (Mycoplasmoides pneumoniae).